Here is a 404-residue protein sequence, read N- to C-terminus: Ethanolamine-phosphate cytidylyltransferase (404 aa).

Residues 173–201 (YADSFGKPPHPTPAGDTLSSEVSSQCPGG) form a disordered region. The span at 189–201 (TLSSEVSSQCPGG) shows a compositional bias: polar residues. CTP-binding positions include 239–240 (AF), 247–250 (HVDF), K277, 325–328 (HGKT), and 354–358 (SGSDL). S356 bears the Phosphoserine mark. 2 positions are modified to phosphothreonine: T359 and T360.

This sequence belongs to the cytidylyltransferase family.

It carries out the reaction phosphoethanolamine + CTP + H(+) = CDP-ethanolamine + diphosphate. Its pathway is phospholipid metabolism; phosphatidylethanolamine biosynthesis; phosphatidylethanolamine from ethanolamine: step 2/3. Its function is as follows. Ethanolamine-phosphate cytidylyltransferase that catalyzes the second step in the synthesis of phosphatidylethanolamine (PE) from ethanolamine via the CDP-ethanolamine pathway. Phosphatidylethanolamine is a dominant inner-leaflet phospholipid in cell membranes, where it plays a role in membrane function by structurally stabilizing membrane-anchored proteins, and participates in important cellular processes such as cell division, cell fusion, blood coagulation, and apoptosis. The chain is Ethanolamine-phosphate cytidylyltransferase (Pcyt2) from Mus musculus (Mouse).